We begin with the raw amino-acid sequence, 356 residues long: Carminomycin 4-O-methyltransferase DnrK (356 aa).

Arginine 153 provides a ligand contact to S-adenosyl-L-methionine. Aspartate 163 contributes to the substrate binding site. Residues glycine 187, glutamate 210, 237–238 (DF), and serine 252 contribute to the S-adenosyl-L-methionine site. Asparagine 257 and arginine 303 together coordinate substrate.

The protein belongs to the class I-like SAM-binding methyltransferase superfamily. Cation-independent O-methyltransferase family. As to quaternary structure, homodimer and homotetramer in equilibrium.

The enzyme catalyses carminomycin + S-adenosyl-L-methionine = daunorubicin + S-adenosyl-L-homocysteine + H(+). The protein operates within antibiotic biosynthesis; daunorubicin biosynthesis. It functions in the pathway antibiotic biosynthesis; carminomycin biosynthesis. Involved in the biosynthesis of the anthracyclines carminomycin and daunorubicin (daunomycin) which are aromatic polyketide antibiotics that exhibit high cytotoxicity and are widely applied in the chemotherapy of a variety of cancers. In vivo, catalyzes the transfer of a methyl group from S-adenosyl-L-methionine to the 4-O-position of carminomycin to form daunorubicin. In vitro, it also methylates the anthracyclines rhodomycin D (10-carbomethoxy-13-deoxycarminomycin) and 13-deoxy-carminomycin at the 4-hydroxyl position. It is quite specific with respect to the length of the carbohydrate chain at the C7 position, but it can accept substrates with bulky substituent at C10 position. In Streptomyces peucetius, this protein is Carminomycin 4-O-methyltransferase DnrK (dnrK).